The sequence spans 249 residues: UPF0696 protein C11orf68 homolog (249 aa).

It belongs to the UPF0696 family.

This chain is UPF0696 protein C11orf68 homolog, found in Danio rerio (Zebrafish).